The primary structure comprises 930 residues: GPI ethanolamine phosphate transferase 1 (930 aa).

Residues 1-8 are Cytoplasmic-facing; the sequence is MARLGRTG. A helical membrane pass occupies residues 9–29; it reads FLTLAVVFHLIYAYSIFDIYF. The Lumenal segment spans residues 30–466; that stretch reads VSPIVSGMRP…LQTYDWLFLR (437 aa). N-linked (GlcNAc...) asparagine glycosylation occurs at N148. Residues 467 to 487 form a helical membrane-spanning segment; the sequence is TIVTFGYVGWIAYALTTVIHL. Residues 488-498 are Cytoplasmic-facing; sequence HVLHGASESDR. A helical membrane pass occupies residues 499-519; it reads TTASISFFSSVLVALFSVFLY. Over 520–521 the chain is Lumenal; that stretch reads QG. A helical transmembrane segment spans residues 522-542; it reads SPWRYYLYGFFPIFFWEEVFA. Residues 543 to 569 are Cytoplasmic-facing; the sequence is RRKAFHAGRAGALLLPKRDLHSNKVED. A helical membrane pass occupies residues 570 to 590; sequence IDTITYGGAFMLLTGLLYLLF. Topologically, residues 591-611 are lumenal; the sequence is EDEILGTSHQPAAVSRKGSRN. A helical transmembrane segment spans residues 612-632; the sequence is IMGLQLGMVLLALIVTRSSAA. The Cytoplasmic segment spans residues 633–639; sequence SLQAKQG. A helical transmembrane segment spans residues 640 to 660; it reads LPFGNQVVGWGVLIASLLLPF. Topologically, residues 661–684 are lumenal; that stretch reads AHRLYPNSHYLHRLMIIFLTFSPT. The helical transmembrane segment at 685 to 705 threads the bilayer; it reads FIILTISYEGLFYFAFCMTLV. At 706 to 761 the chain is on the cytoplasmic side; the sequence is TWVRLEHATYVYTAKPVAKQAQETIEPPKKANPGATTVVDGETYRFRTLTVSDARV. The helical transmembrane segment at 762–782 threads the bilayer; that stretch reads ALFFFFLLQSAFFSTGNIASI. Topologically, residues 783–803 are lumenal; the sequence is SSFSLDSVYRLIPVFNPFSQG. A helical transmembrane segment spans residues 804 to 824; that stretch reads ALLILKLLIPFAIISANLGIL. Residues 825 to 833 lie on the Cytoplasmic side of the membrane; sequence NRRLEVAPS. Residues 834-854 form a helical membrane-spanning segment; the sequence is ALFMVVMAISDVMTLNFFYMV. Over 855–870 the chain is Lumenal; it reads RDEGSWLDIGTTISHF. The helical transmembrane segment at 871 to 891 threads the bilayer; sequence CIASFLCTFVAGLEFLSEVFI. Residues 892 to 930 are Cytoplasmic-facing; it reads SGVDFGLRTDAITASVPDIVNGITSKGQKDVPNGVEDKE.

Belongs to the PIGG/PIGN/PIGO family. PIGN subfamily.

The protein localises to the endoplasmic reticulum membrane. The protein operates within glycolipid biosynthesis; glycosylphosphatidylinositol-anchor biosynthesis. In terms of biological role, ethanolamine phosphate transferase involved in glycosylphosphatidylinositol-anchor biosynthesis. Transfers ethanolamine phosphate to the first alpha-1,4-linked mannose of the glycosylphosphatidylinositol precursor of GPI-anchor. The polypeptide is GPI ethanolamine phosphate transferase 1 (mcd4) (Emericella nidulans (strain FGSC A4 / ATCC 38163 / CBS 112.46 / NRRL 194 / M139) (Aspergillus nidulans)).